Here is a 605-residue protein sequence, read N- to C-terminus: DNA primase (605 aa).

The CHC2-type zinc finger occupies 37 to 61 (CPFHADKNPSMHINPIKGFYHCFAC). Residues 248–329 (KEIIVCEGYM…DGKVAILQGG (82 aa)) enclose the Toprim domain. Positions 254, 298, and 300 each coordinate Mg(2+).

This sequence belongs to the DnaG primase family. In terms of assembly, monomer. Interacts with DnaB. Requires Zn(2+) as cofactor. It depends on Mg(2+) as a cofactor.

The enzyme catalyses ssDNA + n NTP = ssDNA/pppN(pN)n-1 hybrid + (n-1) diphosphate.. In terms of biological role, RNA polymerase that catalyzes the synthesis of short RNA molecules used as primers for DNA polymerase during DNA replication. The polypeptide is DNA primase (Campylobacter jejuni subsp. jejuni serotype O:2 (strain ATCC 700819 / NCTC 11168)).